Consider the following 292-residue polypeptide: NAD kinase (292 aa).

The active-site Proton acceptor is Asp73. NAD(+) contacts are provided by residues 73–74, 147–148, His158, Arg175, Asp177, 188–193, and Gln247; these read DG, NE, and TAYSLS.

The protein belongs to the NAD kinase family. A divalent metal cation serves as cofactor.

The protein resides in the cytoplasm. The catalysed reaction is NAD(+) + ATP = ADP + NADP(+) + H(+). In terms of biological role, involved in the regulation of the intracellular balance of NAD and NADP, and is a key enzyme in the biosynthesis of NADP. Catalyzes specifically the phosphorylation on 2'-hydroxyl of the adenosine moiety of NAD to yield NADP. This chain is NAD kinase, found in Shigella dysenteriae serotype 1 (strain Sd197).